Consider the following 163-residue polypeptide: MAENTNDSAVLETEEELTSYTTETNAGAGTGTSTIAPGYGTGRRKEAVARVRLVPGTGKWTINGRTLEEYFPAKLLQREVNSPIVLLKLEGKFDAIVLVDGGGTTGQAGAIRLGVARALNAIDRDANRAALKKAGFLTRDARVVERKKAGLHKARRAPQFSKR.

The interval 1-41 is disordered; the sequence is MAENTNDSAVLETEEELTSYTTETNAGAGTGTSTIAPGYGT. Over residues 18-38 the composition is skewed to low complexity; sequence TSYTTETNAGAGTGTSTIAPG.

Belongs to the universal ribosomal protein uS9 family.

The polypeptide is Small ribosomal subunit protein uS9 (Bifidobacterium adolescentis (strain ATCC 15703 / DSM 20083 / NCTC 11814 / E194a)).